We begin with the raw amino-acid sequence, 686 residues long: U-box domain-containing protein 19 (686 aa).

In terms of domain architecture, U-box spans 277–351 (LNVDDLRCPI…QSYSKQNGVV (75 aa)). ARM repeat units lie at residues 406–445 (TFYR…NLSK), 448–489 (AGKT…YLSS), 491–533 (GDYS…SLLM), 536–577 (PDNH…KMAE), and 579–620 (PDGM…NLCH).

It carries out the reaction S-ubiquitinyl-[E2 ubiquitin-conjugating enzyme]-L-cysteine + [acceptor protein]-L-lysine = [E2 ubiquitin-conjugating enzyme]-L-cysteine + N(6)-ubiquitinyl-[acceptor protein]-L-lysine.. Its pathway is protein modification; protein ubiquitination. In terms of biological role, functions as an E3 ubiquitin ligase. This Arabidopsis thaliana (Mouse-ear cress) protein is U-box domain-containing protein 19 (PUB19).